A 705-amino-acid chain; its full sequence is Elongation factor G (705 aa).

In terms of domain architecture, tr-type G spans 6–282 (NKVRNIGIMA…AVVDFLPSPL (277 aa)). GTP contacts are provided by residues 15–22 (AHIDAGKT), 79–83 (DTPGH), and 133–136 (NKMD).

This sequence belongs to the TRAFAC class translation factor GTPase superfamily. Classic translation factor GTPase family. EF-G/EF-2 subfamily.

The protein resides in the cytoplasm. In terms of biological role, catalyzes the GTP-dependent ribosomal translocation step during translation elongation. During this step, the ribosome changes from the pre-translocational (PRE) to the post-translocational (POST) state as the newly formed A-site-bound peptidyl-tRNA and P-site-bound deacylated tRNA move to the P and E sites, respectively. Catalyzes the coordinated movement of the two tRNA molecules, the mRNA and conformational changes in the ribosome. The sequence is that of Elongation factor G from Corynebacterium glutamicum (strain ATCC 13032 / DSM 20300 / JCM 1318 / BCRC 11384 / CCUG 27702 / LMG 3730 / NBRC 12168 / NCIMB 10025 / NRRL B-2784 / 534).